The primary structure comprises 348 residues: EGF-like domain-containing protein 1 (348 aa).

The signal sequence occupies residues 1-19; it reads MFYLSTFMTIVISLSLVSC. Residues 60 to 92 enclose the EGF-like domain; that stretch reads TGSNCTVTCQNNGKCYDGSKCLCSSDYTGDLCE. 3 cysteine pairs are disulfide-bonded: Cys64–Cys74, Cys68–Cys80, and Cys82–Cys91. One can recognise a ZP domain in the interval 99–342; sequence RCTLDAVVFE…PTCAAPXVGQ (244 aa).

In terms of tissue distribution, prismatic layer of shell (at protein level). Expressed primarily in the mantle with highest level in the mantle edge and lower level in the mantle pallium.

The protein resides in the secreted. The protein is EGF-like domain-containing protein 1 of Pinctada maxima (Silver-lipped pearl oyster).